The following is a 412-amino-acid chain: Burnettramic acids biosynthesis cluster protein E (412 aa).

Disordered regions lie at residues 1 to 66, 308 to 342, and 386 to 412; these read MAIA…KKIR, RNPT…SLAT, and SRAE…AAKG. Residues 36–58 show a composition bias toward acidic residues; sequence EDEQWALDELQDELCQEEPSDSE. The span at 395-404 shows a compositional bias: polar residues; sequence EATTEPSVQS.

It participates in mycotoxin biosynthesis. In terms of biological role, part of the gene cluster that mediates the biosynthesis of burnettramic acids, an unusual class of bolaamphiphilic pyrrolizidinediones that display potent antibacterial, antifungal, and cytotoxic activities. The first step of the biosynthesis of burnettramic acids is the hydroxylation of proline by the proline hydroxylase buaE to generate 4-hydroxyproline. The PKS-NRPS buaA and trans-enoyl reductase buaC construct the highly reduced polyketide chain, and the condensation (C) domain of buaA then catalyzes the amide bond formation with the activated 4-hydroxyproline. This is followed by the R domain releasing the nascent polyketide-peptide directly via a Dieckmann condensation to afford a tetramic acid fused to the hydroxyproline, generating the bicyclic pyrrolidinedione moiety. The cytochrome P450 monooxygenases buaD and buaG are likely responsible for the multiple hydroxylations on the polyketide chain and its terminus, although in the heterologous context, buaD does not appear to be required. Therefore, while buaG may be a multifunctional cytochrome P450 monooxygenase, it cannot be ruled out that the two secondary alcohols on the polyketide chain could have an acetate origin. Finally, the glycosyltransferase buaB transfers beta-D-mannose to the aglycone burnettramic acid A to form burnettramic acid A. Burnettramic acid B is a minor cis-pyrrolizidine epimer of burnettramic acid A and it is likely that small amounts of it form naturally in acidic environments. The role of the uncharacterized protein buaF in the biosynthesis of burnettramic acids has still to be determined. The polypeptide is Burnettramic acids biosynthesis cluster protein E (Petromyces alliaceus (Aspergillus alliaceus)).